The sequence spans 364 residues: Uroporphyrinogen decarboxylase (364 aa).

Residues 28–32, Asp78, Tyr160, Thr215, and His333 contribute to the substrate site; that span reads RQAGR.

Belongs to the uroporphyrinogen decarboxylase family. In terms of assembly, homodimer.

The protein localises to the cytoplasm. The catalysed reaction is uroporphyrinogen III + 4 H(+) = coproporphyrinogen III + 4 CO2. It participates in porphyrin-containing compound metabolism; protoporphyrin-IX biosynthesis; coproporphyrinogen-III from 5-aminolevulinate: step 4/4. Its function is as follows. Catalyzes the decarboxylation of four acetate groups of uroporphyrinogen-III to yield coproporphyrinogen-III. The chain is Uroporphyrinogen decarboxylase from Burkholderia cenocepacia (strain ATCC BAA-245 / DSM 16553 / LMG 16656 / NCTC 13227 / J2315 / CF5610) (Burkholderia cepacia (strain J2315)).